The chain runs to 169 residues: Nucleoside diphosphate kinase 3 (169 aa).

ADP is bound by residues Lys-29, Arg-105, Thr-111, Arg-122, Val-129, and Asn-132. The active-site Pros-phosphohistidine intermediate is His-135.

Belongs to the NDK family. As to quaternary structure, homohexamer. Requires Mg(2+) as cofactor.

The protein localises to the mitochondrion outer membrane. Its subcellular location is the cytoplasm. It is found in the cytoskeleton. It localises to the cilium basal body. It catalyses the reaction a 2'-deoxyribonucleoside 5'-diphosphate + ATP = a 2'-deoxyribonucleoside 5'-triphosphate + ADP. The enzyme catalyses a ribonucleoside 5'-diphosphate + ATP = a ribonucleoside 5'-triphosphate + ADP. Its function is as follows. Catalyzes the phosphorylation of ribonucleosides and deoxyribonucleoside diphosphates, other than ATP, into the corresponding triphosphates with ATP as the major phosphate donor. The ATP gamma phosphate is transferred to the nucleoside diphosphate beta phosphate via a ping-pong mechanism, using a phosphorylated active-site intermediate. Through the catalyzed exchange of gamma-phosphate between di- and triphosphonucleosides participates in regulation of intracellular nucleotide homeostasis. Required for ciliary function during renal development. Independently of its kinase activity, facilitates mitochondrial tethering prior to membrane fusion through its direct membrane-binding and hexamerization. Implicated in repair of both single- and double-stranded breaks in DNA, independently of its kinase activity. The chain is Nucleoside diphosphate kinase 3 from Danio rerio (Zebrafish).